An 89-amino-acid polypeptide reads, in one-letter code: FMRFamide-like neuropeptides 19 (89 aa).

The first 20 residues, 1–20 (MSFQLTLFSMLFLLIAVVVG), serve as a signal peptide directing secretion. A propeptide spanning residues 21–67 (QPIQSQNGDLKMQAVQDNSPLNMEAFNDDSALYDYLEQSDPSLKSME) is cleaved from the precursor. Phe76 carries the phenylalanine amide modification. Residues 80–89 (ASWASSVRFG) constitute a propeptide that is removed on maturation.

The protein belongs to the FARP (FMRFamide related peptide) family. In terms of tissue distribution, each flp gene is expressed in a distinct set of neurons. Flp-19 is expressed in the URX interneurons, the serotonin and acetylcholine-expressing HSN neurons, and the AIN, AWA and BAG neurons.

Its subcellular location is the secreted. Functionally, FMRFamides and FMRFamide-like peptides are neuropeptides. WANQVRF-amide inhibits the activity of dissected pharyngeal myogenic muscle system. The chain is FMRFamide-like neuropeptides 19 from Caenorhabditis elegans.